We begin with the raw amino-acid sequence, 528 residues long: Bifunctional dihydrofolate reductase-thymidylate synthase (528 aa).

The tract at residues 1–20 (MASELLANPTNGSGITRPDP) is disordered. Residues 23–200 (TYQVVVAATQ…IRYCFTTYVR (178 aa)) enclose the DHFR domain. Val27 provides a ligand contact to substrate. NADP(+) is bound by residues Ala29 and 35–41 (GIGKDGK). Asp49 lines the substrate pocket. NADP(+) is bound by residues 73–75 (RKT) and 94–97 (LTRS). Residues Ile136, Tyr142, and Thr157 each contribute to the substrate site. Residue 137-144 (GGGQIYRE) coordinates NADP(+). Positions 202–528 (RNSVAELTSQ…HQKIEMKMAV (327 aa)) are thymidylate synthase. Position 264 (Arg264) interacts with dUMP. Cys409 is a catalytic residue. Residues His410, 428–432 (QRSAD), Asn440, and 470–472 (HVY) each bind dUMP.

This sequence in the N-terminal section; belongs to the dihydrofolate reductase family. It in the C-terminal section; belongs to the thymidylate synthase family.

The catalysed reaction is (6S)-5,6,7,8-tetrahydrofolate + NADP(+) = 7,8-dihydrofolate + NADPH + H(+). It carries out the reaction dUMP + (6R)-5,10-methylene-5,6,7,8-tetrahydrofolate = 7,8-dihydrofolate + dTMP. It participates in cofactor biosynthesis; tetrahydrofolate biosynthesis; 5,6,7,8-tetrahydrofolate from 7,8-dihydrofolate: step 1/1. Bifunctional enzyme. Involved in de novo dTMP biosynthesis. Key enzyme in folate metabolism. Can play two different roles depending on the source of dihydrofolate: de novo synthesis of tetrahydrofolate or recycling of the dihydrofolate released as one of the end products of the TS catalyzed reaction. Catalyzes an essential reaction for de novo glycine and purine synthesis, DNA precursor synthesis, and for the conversion of dUMP to dTMP. The protein is Bifunctional dihydrofolate reductase-thymidylate synthase of Daucus carota (Wild carrot).